Consider the following 204-residue polypeptide: Paraneoplastic antigen-like protein 8C (204 aa).

Residues 135–204 form a disordered region; it reads PPATGPRELP…RRHHASDKKL (70 aa). The span at 182-204 shows a compositional bias: basic residues; it reads VGKRGKRKNKKNRRRHHASDKKL.

It belongs to the PNMA family.

In Homo sapiens (Human), this protein is Paraneoplastic antigen-like protein 8C.